A 153-amino-acid polypeptide reads, in one-letter code: Ribosome maturation factor RimP (153 aa).

Belongs to the RimP family.

The protein resides in the cytoplasm. Required for maturation of 30S ribosomal subunits. This is Ribosome maturation factor RimP from Glaesserella parasuis serovar 5 (strain SH0165) (Haemophilus parasuis).